The chain runs to 337 residues: 1-aminocyclopropane-1-carboxylate deaminase (337 aa).

Residue Lys-50 is modified to N6-(pyridoxal phosphate)lysine. Ser-77 acts as the Nucleophile in catalysis.

This sequence belongs to the ACC deaminase/D-cysteine desulfhydrase family. As to quaternary structure, homotrimer. It depends on pyridoxal 5'-phosphate as a cofactor.

It catalyses the reaction 1-aminocyclopropane-1-carboxylate + H2O = 2-oxobutanoate + NH4(+). Functionally, catalyzes a cyclopropane ring-opening reaction, the irreversible conversion of 1-aminocyclopropane-1-carboxylate (ACC) to ammonia and alpha-ketobutyrate. Allows growth on ACC as a nitrogen source. The chain is 1-aminocyclopropane-1-carboxylate deaminase from Rhizobium rhizogenes (strain K84 / ATCC BAA-868) (Agrobacterium radiobacter).